We begin with the raw amino-acid sequence, 314 residues long: Transcription factor SOX-12 (314 aa).

Disordered stretches follow at residues 1 to 40 (MVQQRGARAKRDGGPPPPGPGPAAEGAREPGWCKTPSGHI) and 101 to 287 (MADY…FEFP). The HMG box DNA-binding region spans 40 to 108 (IKRPMNAFMV…KHMADYPDYK (69 aa)). Gly residues predominate over residues 149 to 159 (RASGGPLGGGA). The segment covering 162 to 173 (PEDDDEDEEEEL) has biased composition (acidic residues). Over residues 174 to 187 (LEVRLLETPGRELW) the composition is skewed to basic and acidic residues. Over residues 191-217 (PAGRAARGPAERAQGPSGEGAAASAAS) the composition is skewed to low complexity. A compositionally biased stretch (acidic residues) spans 221 to 243 (SEDEEPEEEEEEAATAEEGEEET). Residues 282–314 (SHFEFPDYCTPEVTEMIAGDWRSSSIADLVFTY) form a required for transcriptional activation activity and synergistic coactivation of transcriptional activity with POU3F2 region.

Expressed in splenic and thymic regulatory T-cells (at protein level). Expressed in embryonic molar and incisor teeth.

It localises to the nucleus. Transcription factor that binds to DNA at the consensus sequence 5'-ACCAAAG-3'. Acts as a transcriptional activator. Binds cooperatively with POU3F2/BRN2 or POU3F1/OCT6 to gene promoters, which enhances transcriptional activation. Involved in the differentiation of naive CD4-positive T-cells into peripherally induced regulatory T (pT reg) cells under inflammatory conditions. Binds to the promoter region of the FOXP3 gene and promotes its transcription, and might thereby contribute to pT reg cell differentiation in the spleen and lymph nodes during inflammation. Plays a redundant role with SOX4 and SOX11 in cell survival of developing tissues such as the neural tube, branchial arches and somites, thereby contributing to organogenesis. This Mus musculus (Mouse) protein is Transcription factor SOX-12 (Sox12).